The chain runs to 450 residues: Signal recognition particle protein (450 aa).

GTP-binding positions include 107–114 (GLQGSGKT), 190–194 (DTAGR), and 248–251 (TKTD).

Belongs to the GTP-binding SRP family. SRP54 subfamily. As to quaternary structure, part of the signal recognition particle protein translocation system, which is composed of SRP and FtsY. SRP is a ribonucleoprotein composed of Ffh and a 4.5S RNA molecule.

It localises to the cytoplasm. It carries out the reaction GTP + H2O = GDP + phosphate + H(+). Functionally, involved in targeting and insertion of nascent membrane proteins into the cytoplasmic membrane. Binds to the hydrophobic signal sequence of the ribosome-nascent chain (RNC) as it emerges from the ribosomes. The SRP-RNC complex is then targeted to the cytoplasmic membrane where it interacts with the SRP receptor FtsY. Interaction with FtsY leads to the transfer of the RNC complex to the Sec translocase for insertion into the membrane, the hydrolysis of GTP by both Ffh and FtsY, and the dissociation of the SRP-FtsY complex into the individual components. The sequence is that of Signal recognition particle protein from Buchnera aphidicola subsp. Baizongia pistaciae (strain Bp).